Reading from the N-terminus, the 429-residue chain is Phosphoribosylamine--glycine ligase (429 aa).

The region spanning Lys109–Glu316 is the ATP-grasp domain. Leu135 to Ser196 provides a ligand contact to ATP. A disordered region spans residues Ser212–Ala236. Basic and acidic residues predominate over residues Gln213–Thr223. Glu286 and Asn288 together coordinate Mg(2+).

Belongs to the GARS family. Monomer. The cofactor is Mg(2+). It depends on Mn(2+) as a cofactor.

It catalyses the reaction 5-phospho-beta-D-ribosylamine + glycine + ATP = N(1)-(5-phospho-beta-D-ribosyl)glycinamide + ADP + phosphate + H(+). It functions in the pathway purine metabolism; IMP biosynthesis via de novo pathway; N(1)-(5-phospho-D-ribosyl)glycinamide from 5-phospho-alpha-D-ribose 1-diphosphate: step 2/2. In terms of biological role, catalyzes the reversible conversion of phosphoribosylamine to glycinamide ribonucleotide, an enzymatic step in purine biosynthesis pathway. This is Phosphoribosylamine--glycine ligase (purD) from Escherichia coli (strain K12).